Reading from the N-terminus, the 219-residue chain is uncharacterized protein (219 aa).

Positions 139–154 are enriched in basic residues; it reads PRKIKQKKKTKKKRPS. A disordered region spans residues 139 to 160; the sequence is PRKIKQKKKTKKKRPSKSAPKT. The 59-residue stretch at 159-217 folds into the LysM domain; that stretch reads KTYTVKKGDTLWDLAGKFYGDSTKWRKIWKVNKKAMIKRSKRNIRQPGHWIFPGQKLKI.

This is an uncharacterized protein from Bacillus subtilis (strain 168).